Reading from the N-terminus, the 89-residue chain is LSM complex subunit LSM3 (89 aa).

The 80-residue stretch at 3-82 (TPLDLLKLNL…VTLISTPSED (80 aa)) folds into the Sm domain.

It belongs to the snRNP Sm proteins family. In terms of assembly, component of the heptameric LSM1-LSM7 complex that forms a seven-membered ring structure with a donut shape. The LSm subunits are arranged in the order LSM1, LSM2, LSM3, LSM6, LSM5, LSM7 and LSM4. Except for LSM1, where a C-terminal helix crosses the ring structure to form additional interactions with LSM3 and LSM6, each subunit interacts only with its two neighboring subunits. The LSM1-LSM7 complex interacts with PAT1; within the complex PAT1 has direct interactions with LSM2 and LSM3. The LSM1-LSM7 complex interacts with XRN1. Component of the heptameric LSM2-LSM8 complex that forms a seven-membered ring structure with a donut shape; an RNA strand can pass through the hole in the center of the ring structure. The LSm subunits are arranged in the order LSM8, LSM2, LSM3, LSM6, LSM5, LSM7 and LSM4. Component of the spliceosome U4/U6-U5 tri-snRNP complex composed of the U4, U6 and U5 snRNAs and at least PRP3, PRP4, PRP6, PRP8, PRP18, PRP31, PRP38, SNU13, SNU23, SNU66, SNU114, SPP381, SMB1, SMD1, SMD2, SMD3, SMX2, SMX3, LSM2, LSM3, LSM4, LSM5, LSM6, LSM7, LSM8, BRR2 and DIB1. May be found in a complex comprising LSM2-LSM7 without LSM1 or LSM8; the complex associates with pre-P RNA and snoRNA SNR5.

It localises to the nucleus. It is found in the nucleolus. Its subcellular location is the cytoplasm. Component of LSm protein complexes, which are involved in RNA processing and may function in a chaperone-like manner. Component of the cytoplasmic LSM1-LSM7 complex which is involved in mRNA degradation by activating the decapping step. Together with PAT1, the LSM1-LSM7 complex binds to osmotic stress-activated mRNAs to attenuate the osmotic stress response, probably by limiting ribosome access to the mRNA and consequently translation. Component of the nuclear LSM2-LSM8 complex, which is involved in spliceosome assembly. The LSM2-LSM8 complex plays a role in the biogenesis of the spliceosomal U4/U6-U5 tri-snRNP complex by accelerating PRP24-mediated annealing of U4/U6 di-snRNA. The LSM2-LSM8 complex binds U6 snRNA terminating with a non-cyclic 3' phosphate group. LSM2-LSM8 is probably also involved in degradation of nuclear pre-mRNA by targeting them for decapping. LSM2-LSM8 could be involved in processing of pre-tRNAs, pre-rRNAs and U3 snoRNA, although involvement may be indirect. In a complex that probably contains LSM2-LSM7, but not LSM1 or LSM8, associates with the precursor of the RNA component of RNase P (pre-P RNA) and may be involved in maturing pre-P RNA; the complex also associates with snoRNA SNR5. This is LSM complex subunit LSM3 (LSM3) from Saccharomyces cerevisiae (strain ATCC 204508 / S288c) (Baker's yeast).